An 87-amino-acid polypeptide reads, in one-letter code: Small ribosomal subunit protein bS21 (87 aa).

Residues 35-52 show a composition bias toward basic and acidic residues; the sequence is HYEKPSEKKAREKAEAVR. Positions 35–87 are disordered; it reads HYEKPSEKKAREKAEAVRRARKLARKKLQREGLLPSKPKPAFGADRRPSAAAR. A compositionally biased stretch (basic residues) spans 53-62; that stretch reads RARKLARKKL. A compositionally biased stretch (basic and acidic residues) spans 78–87; that stretch reads ADRRPSAAAR.

The sequence is that of Small ribosomal subunit protein bS21 from Rhodopseudomonas palustris (strain ATCC BAA-98 / CGA009).